Here is a 757-residue protein sequence, read N- to C-terminus: RNA-directed RNA polymerase catalytic subunit (757 aa).

Residues 53–82 (GRWTTNTETGAPQLNPIDGPLPEDNEPSGY) form a disordered region. The segment covering 55–64 (WTTNTETGAP) has biased composition (polar residues). 2 short sequence motifs (nuclear localization signal) span residues 187-195 (RKRRVRDNV) and 203-216 (RTIG…NKRS). A promoter-binding site region spans residues 249–256 (RGFVYFVE). A RdRp catalytic domain is found at 286 to 483 (VRKMMTNSQD…GINMSKKKSY (198 aa)).

This sequence belongs to the influenza viruses polymerase PB1 family. As to quaternary structure, influenza RNA polymerase is composed of three subunits: PB1, PB2 and PA. Interacts (via N-terminus) with PA (via C-terminus). Interacts (via C-terminus) with PB2 (via N-terminus); this interaction is essential for transcription initiation. Interacts (via C-terminus) with human PKP2 (via N-terminus); the interaction competitively inhibits the interaction between the RNA polymerase subunits PB1 and PB2. Post-translationally, phosphorylated by host PRKCA.

The protein localises to the host nucleus. Its subcellular location is the host cytoplasm. It carries out the reaction RNA(n) + a ribonucleoside 5'-triphosphate = RNA(n+1) + diphosphate. Its function is as follows. RNA-dependent RNA polymerase which is responsible for replication and transcription of virus RNA segments. The transcription of viral mRNAs occurs by a unique mechanism called cap-snatching. 5' methylated caps of cellular mRNAs are cleaved after 10-13 nucleotides by PA. In turn, these short capped RNAs are used as primers by PB1 for transcription of viral mRNAs. During virus replication, PB1 initiates RNA synthesis and copy vRNA into complementary RNA (cRNA) which in turn serves as a template for the production of more vRNAs. This is RNA-directed RNA polymerase catalytic subunit from Influenza A virus (strain A/USA:Iowa/1943 H1N1).